The chain runs to 323 residues: MTRHQTHLPFHIVQEGNSIDKPPYSYVALIAMAIDASPDKRMTLNQIYKFIEAKFPYYRDADAKRKQGWQNSIRHNLSLNDCFVKKARDGQSCANDRKGNYWQMVADNAPQFDNGNFKRRRVKRLGIGKMGYANTTETTETGTILQQQLPFFNGLKWPQNIQTMDPFQFFKFQYPNSITDSANTSQINNSSSSSSSFDTSIYTSAFPIPTSHFDTNLVAPSQPPPVVSDVEVVPSDTVKEEVLVDMKPLIPGISSTTFLTSLQMTDPRSIEQQQLLSTASNMYPNAFMPPYTNWSCQPTTTFTGLSFDDPSLYGYGQQFPASS.

A DNA-binding region (fork-head) is located at residues 21–122; sequence KPPYSYVALI…DNGNFKRRRV (102 aa).

It localises to the nucleus. Probable transcription factor. Binds to the DNA sequence motif 5'-[TA]TGTT[TG]T[TG][ATG]TT-3'. Regulates sexual dimorphism in the gonad, promoting male gonadal cell fates in chromosomally (XO) male animals, yet plays a role in gonadogenesis in both sexes; probably acts downstream of terminal regulator of sex determination tra-1, to control early gonadogenesis. Positively modulates expression of homeobox protein egl-5, probably acting indirectly, during early gonadal development. The chain is Forkhead transcription factor fkh-6 from Caenorhabditis elegans.